Consider the following 804-residue polypeptide: Ral guanine nucleotide dissociation stimulator-like 1 (804 aa).

The 131-residue stretch at 101–231 (KIRSIRAGTL…RAQSLLEQLR (131 aa)) folds into the N-terminal Ras-GEF domain. The 270-residue stretch at 270-539 (EVDLVAEQLT…YVLSCEVEGL (270 aa)) folds into the Ras-GEF domain. 2 disordered regions span residues 564 to 611 (NDST…TPTH) and 640 to 676 (SASI…GFPP). Low complexity-rich tracts occupy residues 581-607 (PTGS…SDGM) and 640-649 (SASISLASPT). The segment covering 661–671 (ISLTPLMSPTS) has biased composition (polar residues). One can recognise a Ras-associating domain in the interval 684–771 (DACIIRVSLE…FDFLLRLRGS (88 aa)).

Functionally, probable guanine nucleotide exchange factor. In Danio rerio (Zebrafish), this protein is Ral guanine nucleotide dissociation stimulator-like 1 (rgl1).